The following is a 126-amino-acid chain: Small ribosomal subunit protein uS13 (126 aa).

The interval proline 98–lysine 126 is disordered. Residues alanine 108–lysine 126 are compositionally biased toward basic residues.

This sequence belongs to the universal ribosomal protein uS13 family. Part of the 30S ribosomal subunit. Forms a loose heterodimer with protein S19. Forms two bridges to the 50S subunit in the 70S ribosome.

Functionally, located at the top of the head of the 30S subunit, it contacts several helices of the 16S rRNA. In the 70S ribosome it contacts the 23S rRNA (bridge B1a) and protein L5 of the 50S subunit (bridge B1b), connecting the 2 subunits; these bridges are implicated in subunit movement. Contacts the tRNAs in the A and P-sites. In Parabacteroides distasonis (strain ATCC 8503 / DSM 20701 / CIP 104284 / JCM 5825 / NCTC 11152), this protein is Small ribosomal subunit protein uS13.